A 136-amino-acid polypeptide reads, in one-letter code: Small ribosomal subunit protein eS6 (136 aa).

This sequence belongs to the eukaryotic ribosomal protein eS6 family.

This is Small ribosomal subunit protein eS6 from Methanosarcina acetivorans (strain ATCC 35395 / DSM 2834 / JCM 12185 / C2A).